A 418-amino-acid chain; its full sequence is Tyrosine--tRNA ligase (418 aa).

Residue Tyr34 participates in L-tyrosine binding. The short motif at 39–48 (PTADSLHLGH) is the 'HIGH' region element. L-tyrosine-binding residues include Tyr169 and Gln173. Positions 229 to 233 (KFGKS) match the 'KMSKS' region motif. Lys232 contributes to the ATP binding site. One can recognise an S4 RNA-binding domain in the interval 352–418 (LNIVDMLVTA…GKKKYAVLTY (67 aa)).

This sequence belongs to the class-I aminoacyl-tRNA synthetase family. TyrS type 1 subfamily. Homodimer.

Its subcellular location is the cytoplasm. It carries out the reaction tRNA(Tyr) + L-tyrosine + ATP = L-tyrosyl-tRNA(Tyr) + AMP + diphosphate + H(+). Its function is as follows. Catalyzes the attachment of tyrosine to tRNA(Tyr) in a two-step reaction: tyrosine is first activated by ATP to form Tyr-AMP and then transferred to the acceptor end of tRNA(Tyr). This chain is Tyrosine--tRNA ligase, found in Streptococcus equi subsp. zooepidemicus (strain MGCS10565).